The primary structure comprises 277 residues: Basic leucine zipper 9 (277 aa).

Positions 73-141 (ADSPVSANKP…ESAKRSRRRK (69 aa)) are disordered. Phosphoserine is present on Ser-100. The span at 109–118 (AGQSEMTNDP) shows a compositional bias: polar residues. Residues 120–183 (DLKRIRRMNS…RSAGTNNRVL (64 aa)) enclose the bZIP domain. Positions 122-141 (KRIRRMNSNRESAKRSRRRK) are basic motif. Residues 124–131 (IRRMNSNR) carry the Nuclear localization signal motif. A leucine-zipper region spans residues 148–162 (LETQVDSLKGDNSTL).

This sequence belongs to the bZIP family. In terms of assembly, homodimer. Interacts with BZIP1, BZIP2, BZIP10, BZIP11, BZIP25, BZIP44, BZIP53 and BZIP63. Post-translationally, phosphorylated. In terms of tissue distribution, expressed in roots, shoots, stems, young leaves, and flowers, mostly in vascular tissues (e.g. phloem).

It is found in the nucleus. Its function is as follows. Transcription factor. The sequence is that of Basic leucine zipper 9 (BZIP9) from Arabidopsis thaliana (Mouse-ear cress).